Consider the following 1241-residue polypeptide: Intraflagellar transport protein 122 homolog (1241 aa).

WD repeat units follow at residues 10–50 (KAEH…QPLK), 51–91 (GHKD…LKYT), 93–129 (NDAIQCVSYNPITHQLASCSSSDFGLWSPEQKSVSKH), and 131–169 (SSSKIICCSWTNDGQYLALGMFNGIISIRNKNGEEKVKI). The interval 222–246 (VYSSQGSEAEEEEPEEEDDSPRDDN) is disordered. Acidic residues predominate over residues 229–242 (EAEEEEPEEEDDSP). 3 WD repeats span residues 278 to 317 (ALNFDPCCISYFTKGEYILLGGSDKQVSLFTKDGVRLGTV), 319 to 359 (EQNS…HGLY), and 512 to 551 (KQATAVRCLDMSASRKKLAVVDENDTCLVYDIDTKELLFQ).

As to quaternary structure, component of the IFT complex A (IFT-A) complex. IFT-A complex is divided into a core subcomplex composed of IFT122:IFT140:WDR19 which is associated with TULP3 and a peripheral subcomplex composed of IFT43:WDR35:TTC21B. Interacts with IFT43:WDR35; the interaction connects the 2 IFT-A subcomplexes. Interacts with IFTAP; the interaction associates IFTAP with IFT-A complex. As to expression, expressed in many tissues. Predominant expression in testis and pituitary.

It is found in the cell projection. The protein localises to the cilium. The protein resides in the cytoplasm. It localises to the cytoskeleton. Its subcellular location is the cilium basal body. In terms of biological role, as a component of the IFT complex A (IFT-A), a complex required for retrograde ciliary transport and entry into cilia of G protein-coupled receptors (GPCRs), it is required in ciliogenesis and ciliary protein trafficking. Involved in cilia formation during neuronal patterning. Acts as a negative regulator of Shh signaling. Required to recruit TULP3 to primary cilia. The polypeptide is Intraflagellar transport protein 122 homolog (Homo sapiens (Human)).